A 706-amino-acid polypeptide reads, in one-letter code: Coiled-coil domain-containing protein 177 (706 aa).

Residues 1 to 11 (MVDPVPEEEKE) are compositionally biased toward acidic residues. Disordered regions lie at residues 1–63 (MVDP…GGRR), 179–262 (ASAL…LREL), and 268–287 (ASAR…NPLG). Low complexity-rich tracts occupy residues 28–49 (PPDA…AAAP) and 179–209 (ASAL…RRTS). Pro residues predominate over residues 210-221 (PSPPARSRPPPA). The span at 242–257 (ALSSESGASSSSYSGE) shows a compositional bias: low complexity. The residue at position 310 (Ser310) is a Phosphoserine. The stretch at 360 to 624 (AAHGQWEQQR…QTRLEKERAQ (265 aa)) forms a coiled coil. Disordered stretches follow at residues 364-386 (QWEQ…KQRA), 398-425 (VEER…RSEE), 448-580 (DDRL…EREH), and 651-706 (ERSE…LDRK). Residues 368 to 386 (QRVRAEQRREREEREKQRA) show a composition bias toward basic and acidic residues. Composition is skewed to basic and acidic residues over residues 448 to 529 (DDRL…REGL), 548 to 580 (QEQR…EREH), and 651 to 663 (ERSE…RRSA). The segment covering 664 to 674 (LESARSTARAS) has biased composition (low complexity). Basic and acidic residues predominate over residues 676–706 (HVREKVREETNTRSFDRMVREAQLHASLDRK).

The chain is Coiled-coil domain-containing protein 177 (Ccdc177) from Mus musculus (Mouse).